The chain runs to 251 residues: MAIHADTHDDLRLFQTGEHACGYWSGRQARDLVLDPHDPRLGAIYPQALAWGFRRSGDLVYRPHCERCRACVPVRIAVDAFHPDRSQRRCLARNRDLVVRVVAAERTDEQLALYRQYLKHRHPGGGMDQHGATEFDQFLIGGWSHGRFLEIREPAIAHLPGRLLAVAVTDVTEHALSAVYTFYAPEAAARSLGTFAILQQIQWAQRERRAHLYLGYWIDGHAKMNYKRRFSALEAYDGRHWRGLPAHASVD.

The protein belongs to the R-transferase family. Bpt subfamily.

The protein localises to the cytoplasm. The catalysed reaction is N-terminal L-glutamyl-[protein] + L-leucyl-tRNA(Leu) = N-terminal L-leucyl-L-glutamyl-[protein] + tRNA(Leu) + H(+). It carries out the reaction N-terminal L-aspartyl-[protein] + L-leucyl-tRNA(Leu) = N-terminal L-leucyl-L-aspartyl-[protein] + tRNA(Leu) + H(+). Functionally, functions in the N-end rule pathway of protein degradation where it conjugates Leu from its aminoacyl-tRNA to the N-termini of proteins containing an N-terminal aspartate or glutamate. This chain is Aspartate/glutamate leucyltransferase, found in Xanthomonas axonopodis pv. citri (strain 306).